A 432-amino-acid polypeptide reads, in one-letter code: Putative D-alanyl-D-alanine carboxypeptidase (432 aa).

Residues 7 to 25 (ATVLLTFSLSAFAVEYPVL) traverse the membrane as a helical; Signal-anchor segment.

It belongs to the peptidase S12 family. YfeW subfamily.

The protein localises to the cell inner membrane. The enzyme catalyses Preferential cleavage: (Ac)2-L-Lys-D-Ala-|-D-Ala. Also transpeptidation of peptidyl-alanyl moieties that are N-acyl substituents of D-alanine.. This chain is Putative D-alanyl-D-alanine carboxypeptidase, found in Salmonella typhi.